Reading from the N-terminus, the 108-residue chain is Ribonuclease P protein component 4 (108 aa).

Zn(2+) is bound by residues cysteine 67, cysteine 70, cysteine 93, and cysteine 96.

It belongs to the eukaryotic/archaeal RNase P protein component 4 family. In terms of assembly, consists of a catalytic RNA component and at least 4-5 protein subunits. Zn(2+) is required as a cofactor.

The protein resides in the cytoplasm. The catalysed reaction is Endonucleolytic cleavage of RNA, removing 5'-extranucleotides from tRNA precursor.. In terms of biological role, part of ribonuclease P, a protein complex that generates mature tRNA molecules by cleaving their 5'-ends. The chain is Ribonuclease P protein component 4 from Methanococcoides burtonii (strain DSM 6242 / NBRC 107633 / OCM 468 / ACE-M).